A 293-amino-acid chain; its full sequence is Protease HtpX homolog (293 aa).

2 helical membrane-spanning segments follow: residues 6–26 (VAVM…LIGG) and 28–48 (SGMV…YWNS). His-130 is a binding site for Zn(2+). Glu-131 is a catalytic residue. Position 134 (His-134) interacts with Zn(2+). Transmembrane regions (helical) follow at residues 145-165 (LTAT…FFGG) and 172-192 (PLGA…AMMV). Glu-201 serves as a coordination point for Zn(2+).

This sequence belongs to the peptidase M48B family. Zn(2+) serves as cofactor.

Its subcellular location is the cell inner membrane. The protein is Protease HtpX homolog of Rhodospirillum rubrum (strain ATCC 11170 / ATH 1.1.1 / DSM 467 / LMG 4362 / NCIMB 8255 / S1).